The chain runs to 153 residues: Ribosomal RNA large subunit methyltransferase H (153 aa).

S-adenosyl-L-methionine contacts are provided by residues Leu75, Gly102, and 121-126 (LSPLTM).

Belongs to the RNA methyltransferase RlmH family. As to quaternary structure, homodimer.

It is found in the cytoplasm. The catalysed reaction is pseudouridine(1915) in 23S rRNA + S-adenosyl-L-methionine = N(3)-methylpseudouridine(1915) in 23S rRNA + S-adenosyl-L-homocysteine + H(+). Its function is as follows. Specifically methylates the pseudouridine at position 1915 (m3Psi1915) in 23S rRNA. The chain is Ribosomal RNA large subunit methyltransferase H from Nitratiruptor sp. (strain SB155-2).